A 200-amino-acid chain; its full sequence is GTP cyclohydrolase 1 (200 aa).

The Zn(2+) site is built by Cys-87, His-90, and Cys-158.

Belongs to the GTP cyclohydrolase I family. As to quaternary structure, toroid-shaped homodecamer, composed of two pentamers of five dimers.

It catalyses the reaction GTP + H2O = 7,8-dihydroneopterin 3'-triphosphate + formate + H(+). Its pathway is cofactor biosynthesis; 7,8-dihydroneopterin triphosphate biosynthesis; 7,8-dihydroneopterin triphosphate from GTP: step 1/1. The sequence is that of GTP cyclohydrolase 1 from Xanthomonas euvesicatoria pv. vesicatoria (strain 85-10) (Xanthomonas campestris pv. vesicatoria).